We begin with the raw amino-acid sequence, 157 residues long: MTKTVFVLNGPNLNLLGKREPGIYGVATLDDIEASCKREAGQLELQIDFRQSNHEGDLVSWIQEAGEKNAYVLINPAAYSHTSVAIHDAIRSARVTVVEVHLSNIHAREAFRHHSHVSAVAKGVICGFGAEGYLLGLRALAAIAKEEEKNGQSIKGA.

The active-site Proton acceptor is the Tyr24. Substrate contacts are provided by Asn75, His81, and Asp88. His101 acts as the Proton donor in catalysis. Substrate contacts are provided by residues 102–103 (LS) and Arg112.

It belongs to the type-II 3-dehydroquinase family. In terms of assembly, homododecamer.

The catalysed reaction is 3-dehydroquinate = 3-dehydroshikimate + H2O. It participates in metabolic intermediate biosynthesis; chorismate biosynthesis; chorismate from D-erythrose 4-phosphate and phosphoenolpyruvate: step 3/7. Functionally, catalyzes a trans-dehydration via an enolate intermediate. The polypeptide is 3-dehydroquinate dehydratase (Brucella abortus (strain S19)).